Here is a 347-residue protein sequence, read N- to C-terminus: Protein RecA (347 aa).

65-72 (GPESSGKT) contacts ATP.

The protein belongs to the RecA family.

It is found in the cytoplasm. Its function is as follows. Can catalyze the hydrolysis of ATP in the presence of single-stranded DNA, the ATP-dependent uptake of single-stranded DNA by duplex DNA, and the ATP-dependent hybridization of homologous single-stranded DNAs. It interacts with LexA causing its activation and leading to its autocatalytic cleavage. In Stutzerimonas stutzeri (Pseudomonas stutzeri), this protein is Protein RecA.